The primary structure comprises 136 residues: MGSKGLKGVMVCLLILGLVLEQVQVEGKSCCRTTLGRNCYNLCRSRGAQKLCSTVCRCKLTSGLSCPKGFPKLALESNSDEPDTIEYCNLGCRSSVCDYMVNAAADDEEMKLYVENCGDACVNFCNGDAGLTSLDA.

The N-terminal stretch at 1–27 (MGSKGLKGVMVCLLILGLVLEQVQVEG) is a signal peptide. Disulfide bonds link cysteine 30-cysteine 66, cysteine 31-cysteine 58, cysteine 39-cysteine 56, and cysteine 43-cysteine 52. Positions 73-136 (LALESNSDEP…GDAGLTSLDA (64 aa)) are cleaved as a propeptide — acidic domain.

Belongs to the plant thionin (TC 1.C.44) family. 4 C-C subfamily.

It localises to the secreted. In terms of biological role, thionins are small plant proteins which are toxic to animal cells. They seem to exert their toxic effect at the level of the cell membrane. Their precise function is not known. The chain is Alpha-2-purothionin (THI1.2) from Triticum aestivum (Wheat).